A 330-amino-acid chain; its full sequence is Phosphate acyltransferase (330 aa).

The protein belongs to the PlsX family. Homodimer. Probably interacts with PlsY.

The protein resides in the cytoplasm. It carries out the reaction a fatty acyl-[ACP] + phosphate = an acyl phosphate + holo-[ACP]. It functions in the pathway lipid metabolism; phospholipid metabolism. In terms of biological role, catalyzes the reversible formation of acyl-phosphate (acyl-PO(4)) from acyl-[acyl-carrier-protein] (acyl-ACP). This enzyme utilizes acyl-ACP as fatty acyl donor, but not acyl-CoA. This Bacillus cereus (strain B4264) protein is Phosphate acyltransferase.